Reading from the N-terminus, the 729-residue chain is Cullin-6 (729 aa).

Residues 659–720 enclose the Cullin neddylation domain; sequence DRKYEIKACI…EQLYIRRSEN (62 aa). A Glycyl lysine isopeptide (Lys-Gly) (interchain with G-Cter in NEDD8) cross-link involves residue Lys673.

It belongs to the cullin family. Probably interacts with skr-3. Post-translationally, neddylated; which enhances the ubiquitination activity of SCF-like complex.

Its function is as follows. Probable core component of cullin-based SCF-like E3 ubiquitin-protein ligase complexes which mediate the ubiquitination and subsequent proteasomal degradation of target proteins. The polypeptide is Cullin-6 (cul-6) (Caenorhabditis elegans).